We begin with the raw amino-acid sequence, 560 residues long: Nucleoprotein (560 aa).

Positions 54 to 236 (LRKAKRSDAD…ITRDESAVNI (183 aa)) are binding site for the cap structure m7GTP. Polar residues predominate over residues 323-332 (GRSWDNTSVD). Residues 323–349 (GRSWDNTSVDLNPKPDPGPRAPEKNGQ) are disordered. Mn(2+) contacts are provided by Asp-380 and Glu-382. Zn(2+) is bound by residues Glu-390, Cys-497, His-500, and Cys-521. Asp-525 serves as a coordination point for Mn(2+).

This sequence belongs to the arenaviridae nucleocapsid protein family. Homomultimerizes to form the nucleocapsid. Binds to viral genomic RNA. Interacts with glycoprotein G2. Interacts with protein Z; this interaction probably directs the encapsidated genome to budding sites. Interacts with protein L; this interaction does not interfere with Z-L interaction. Interacts with host IKBKE (via Protein kinase domain); the interaction inhibits IKBKE kinase activity.

It localises to the virion. Its subcellular location is the host cytoplasm. Encapsidates the genome, protecting it from nucleases. The encapsidated genomic RNA is termed the nucleocapsid (NC). Serves as template for viral transcription and replication. The increased presence of protein N in host cell does not seem to trigger the switch from transcription to replication as observed in other negative strain RNA viruses. Through the interaction with host IKBKE, strongly inhibits the phosphorylation and nuclear translocation of host IRF3, a protein involved in interferon activation pathway, leading to the inhibition of interferon-beta and IRF3-dependent promoters activation. Also encodes a functional 3'-5' exoribonuclease that degrades preferentially dsRNA substrates and thereby participates in the suppression of interferon induction. The chain is Nucleoprotein from Cupixi mammarenavirus (isolate Rat/Brasil/BeAn 119303/1970) (CPXV).